A 284-amino-acid chain; its full sequence is NAD kinase (284 aa).

Catalysis depends on aspartate 70, which acts as the Proton acceptor. Residues 70-71, 139-140, lysine 167, aspartate 169, leucine 177, 180-185, and glutamine 236 each bind NAD(+); these read DG, NE, and TAYNLS.

This sequence belongs to the NAD kinase family. A divalent metal cation is required as a cofactor.

The protein resides in the cytoplasm. The catalysed reaction is NAD(+) + ATP = ADP + NADP(+) + H(+). Functionally, involved in the regulation of the intracellular balance of NAD and NADP, and is a key enzyme in the biosynthesis of NADP. Catalyzes specifically the phosphorylation on 2'-hydroxyl of the adenosine moiety of NAD to yield NADP. The sequence is that of NAD kinase from Helicobacter pylori (strain ATCC 700392 / 26695) (Campylobacter pylori).